The sequence spans 330 residues: Methionyl-tRNA formyltransferase (330 aa).

116-119 (SLLP) provides a ligand contact to (6S)-5,6,7,8-tetrahydrofolate.

It belongs to the Fmt family.

The enzyme catalyses L-methionyl-tRNA(fMet) + (6R)-10-formyltetrahydrofolate = N-formyl-L-methionyl-tRNA(fMet) + (6S)-5,6,7,8-tetrahydrofolate + H(+). Functionally, attaches a formyl group to the free amino group of methionyl-tRNA(fMet). The formyl group appears to play a dual role in the initiator identity of N-formylmethionyl-tRNA by promoting its recognition by IF2 and preventing the misappropriation of this tRNA by the elongation apparatus. The chain is Methionyl-tRNA formyltransferase from Nitratidesulfovibrio vulgaris (strain ATCC 29579 / DSM 644 / CCUG 34227 / NCIMB 8303 / VKM B-1760 / Hildenborough) (Desulfovibrio vulgaris).